The primary structure comprises 79 residues: Sulfur carrier protein TusA (79 aa).

The active-site Cysteine persulfide intermediate is cysteine 17.

Belongs to the sulfur carrier protein TusA family.

It localises to the cytoplasm. Its function is as follows. Sulfur carrier protein which probably makes part of a sulfur-relay system. This is Sulfur carrier protein TusA from Haemophilus influenzae (strain ATCC 51907 / DSM 11121 / KW20 / Rd).